We begin with the raw amino-acid sequence, 448 residues long: tRNA modification GTPase MnmE (448 aa).

Residues Arg22, Glu83, and Arg122 each contribute to the (6S)-5-formyl-5,6,7,8-tetrahydrofolate site. Positions 219–369 constitute a TrmE-type G domain; it reads GVKTVIVGRP…LESEILKTLK (151 aa). Residue Asn229 participates in K(+) binding. GTP is bound by residues 229 to 234, 248 to 254, and 273 to 276; these read NVGKSS, SDIAGTT, and DTAG. Ser233 provides a ligand contact to Mg(2+). K(+) contacts are provided by Ser248, Ile250, and Thr253. Mg(2+) is bound at residue Thr254. A (6S)-5-formyl-5,6,7,8-tetrahydrofolate-binding site is contributed by Lys448.

The protein belongs to the TRAFAC class TrmE-Era-EngA-EngB-Septin-like GTPase superfamily. TrmE GTPase family. As to quaternary structure, homodimer. Heterotetramer of two MnmE and two MnmG subunits. It depends on K(+) as a cofactor.

The protein localises to the cytoplasm. Its function is as follows. Exhibits a very high intrinsic GTPase hydrolysis rate. Involved in the addition of a carboxymethylaminomethyl (cmnm) group at the wobble position (U34) of certain tRNAs, forming tRNA-cmnm(5)s(2)U34. The sequence is that of tRNA modification GTPase MnmE from Acholeplasma laidlawii (strain PG-8A).